The primary structure comprises 863 residues: Axin-1 (863 aa).

The disordered stretch occupies residues 1-81 (MNVQEQGFPL…PEGSASPTPP (81 aa)). Residues 20-29 (APRPPVPGEE) carry the Tankyrase-binding motif motif. Positions 34–61 (STDSRPVNHSFCSGKGTSIKSETSTATP) are enriched in polar residues. The residue at position 75 (S75) is a Phosphoserine. At S77 the chain carries Phosphoserine; by CK1. The region spanning 88–211 (SLHSLLDDQD…LKSDIYLEYT (124 aa)) is the RGS domain. The interaction with TP53 stretch occupies residues 209–338 (EYTRTGSESP…DADTLSLTDS (130 aa)). 3 disordered regions span residues 215-240 (SESPKVCSDQSSGSGTGKGMSGYLPT), 249-268 (CDQDADEDDGRDPLPPSRLT), and 315-344 (ATSANDSEQQSLSSDADTLSLTDSSVDGIP). S217 carries the post-translational modification Phosphoserine. Residues 249–258 (CDQDADEDDG) show a composition bias toward acidic residues. A compositionally biased stretch (low complexity) spans 325–339 (SLSSDADTLSLTDSS). The tract at residues 348–432 (IRKQHRREMQ…EDGEMPSGPM (85 aa)) is interaction with GSK3B. The tract at residues 353 to 411 (RREMQESIQVNGRVPLPHIPRTYRMPKEIRVEPQKFAEELIHRLEAVQRTREAEEKLEE) is interaction with SIAH1. Positions 433–501 (ASHKLPSVPA…SPDSGHVAKT (69 aa)) are interaction with beta-catenin. Phosphoserine; by CK1 is present on S468. At T480 the chain carries Phosphothreonine; by GSK3-beta. S485 carries the post-translational modification Phosphoserine; by GSK3-beta. Phosphoserine is present on residues S492 and S509. The tract at residues 505-758 (GGTASGHGKH…PVLSVVPAVS (254 aa)) is interaction with RNF111. Residues 529 to 542 (HHRHVHHHVHHNSA) are compositionally biased toward basic residues. Disordered stretches follow at residues 529 to 624 (HHRH…DAEK) and 642 to 664 (HRKAGHGSSGLRKQQAHESSRPL). A compositionally biased stretch (basic and acidic residues) spans 543 to 554 (RPKEQMEAEVAR). Residues 572–790 (PRSYSENAGT…CDSIVVAYYF (219 aa)) form an interaction with PPP2CA region. Polar residues predominate over residues 575 to 584 (YSENAGTTLS). The tract at residues 678-753 (AQLRNSVQPS…RPACAPVLSV (76 aa)) is interaction with HIPK2. One can recognise a DIX domain in the interval 781–863 (CDSIVVAYYF…KIIGKVEKVD (83 aa)). Residues K858 and K861 each participate in a glycyl lysine isopeptide (Lys-Gly) (interchain with G-Cter in SUMO) cross-link.

In terms of assembly, homodimer. Component of the beta-catenin destruction complex, containing at least CTNNB1, an axin and GSK3B, that regulates CTNNB1 protein levels through phosphorylation and ubiquitination. Interacts with GSK3B; the interaction hyperphosphorylates CTNNB1 leading to its ubiquitination and destruction. Interacts with DAXX; the interaction stimulates the interaction of DAXX with TP53, stimulates 'Ser-46' phosphorylation of TP53 and induces cell death on UV irradiation. Also interacts with APC, RNF111, SMAD6 and SMAD7. Interacts (via the C-terminal) with PPP1CA; the interaction dephosphorylates AXIN1 and regulates interaction with GSK3B. Interacts with PPP2CA; the interaction dephosphorylates AXIN1. Interacts with MDFI; the interaction decreases AXIN1-mediated JUN N-terminal kinase (JNK) activation. Interacts with MDFIC; the interaction inhibits beta-cateninin-mediated signaling and AXIN1-mediated JUN N-terminal kinase (JNK) activation. Binds ANKRD6, PIAS1, PIAS2, PIAS4, SUMO1, MAP3K1 and MAP3K4. Component of the AXIN1-HIPK2-TP53 complex. Interacts directly in the complex with TP53 and HIPK2. Interacts with DIXDC1; the interaction prevents interaction with MAP3K1. Interacts with AIDA; the interaction blocks the AXIN1-mediated JNK activation through disrupting AXIN1 homodimerization and Wnt signaling. Interacts with LRP5 (via its phosphorylated PPPSP motifs); the interaction is stimulated by WNT1 and GSK3B and activates beta-catenin signaling. Interacts with CTNNB1 (via the armadillo repeats 2-7). Interacts with MACF1. Found in a complex composed of MACF1, APC, AXIN1, CTNNB1 and GSK3B. Interacts with TNKS. Interacts with DAB2; the interaction is mutually exclusive with the AXIN1:PPP1CA interaction. Interacts with ZBED3 (via PPPSP motif); the interaction is direct, enhanced by protein kinase GSK3B and casein kinase CSNK1E activities and decreases GSK3B-induced beta-catenin serine and threonine phosphorylations. Interacts with WDR26. Interacts with GID8. Interacts with SIAH1 and SIAH2; both probably catalyze AXIN1 ubiquitination and subsequent proteasome-mediated ubiquitin-dependent degradation. Interaction with GSK3B and AXIN1 is competitive. Post-translationally, phosphorylation and dephosphorylation of AXIN1 regulates assembly and function of the beta-catenin complex. Phosphorylated by CK1 and GSK3B. Dephosphorylated by PPP1CA and PPP2CA. Phosphorylation by CK1 enhances binding of GSK3B to AXIN1. Also phosphorylated by CDK2 which regulates interaction with CTNBB1. ADP-ribosylated by tankyrase TNKS and TNKS2. Poly-ADP-ribosylated protein is recognized by RNF146, followed by ubiquitination and subsequent activation of the Wnt signaling pathway. In terms of processing, ubiquitinated by RNF146 when poly-ADP-ribosylated, leading to its degradation and subsequent activation of the Wnt signaling pathway. Deubiquitinated by USP34, deubiquitinated downstream of beta-catenin stabilization step: deubiquitination is important for nuclear accumulation during Wnt signaling to positively regulate beta-catenin (CTNBB1)-mediated transcription. Sumoylation at Lys-858 and Lys-861 prevents ubiquitination and degradation. Sumoylation is required for AXIN1-mediated JNK activation. Ubiquitination by SIAH1 and SIAH2 induces its proteasomal degradation as part of the activation of the Wnt signaling pathway. Expressed in embryonic stem cells.

The protein resides in the cytoplasm. Its subcellular location is the nucleus. The protein localises to the cell membrane. It localises to the membrane. Functionally, component of the beta-catenin destruction complex required for regulating CTNNB1 levels through phosphorylation and ubiquitination, and modulating Wnt-signaling. Controls dorsoventral patterning via two opposing effects; down-regulates CTNNB1 to inhibit the Wnt signaling pathway and ventralize embryos, but also dorsalizes embryos by activating a Wnt-independent JNK signaling pathway. In Wnt signaling, probably facilitates the phosphorylation of CTNNB1 and APC by GSK3B. Likely to function as a tumor suppressor. Facilitates the phosphorylation of TP53 by HIPK2 upon ultraviolet irradiation. Enhances TGF-beta signaling by recruiting the RNF111 E3 ubiquitin ligase and promoting the degradation of inhibitory SMAD7. Also a component of the AXIN1-HIPK2-TP53 complex which controls cell growth, apoptosis and development. This Mus musculus (Mouse) protein is Axin-1 (Axin1).